The following is a 265-amino-acid chain: Tryptophan synthase alpha chain (265 aa).

Residues glutamate 49 and glutamate 60 each act as proton acceptor in the active site.

It belongs to the TrpA family. Tetramer of two alpha and two beta chains.

It catalyses the reaction (1S,2R)-1-C-(indol-3-yl)glycerol 3-phosphate + L-serine = D-glyceraldehyde 3-phosphate + L-tryptophan + H2O. The protein operates within amino-acid biosynthesis; L-tryptophan biosynthesis; L-tryptophan from chorismate: step 5/5. In terms of biological role, the alpha subunit is responsible for the aldol cleavage of indoleglycerol phosphate to indole and glyceraldehyde 3-phosphate. This is Tryptophan synthase alpha chain from Janthinobacterium sp. (strain Marseille) (Minibacterium massiliensis).